The following is a 319-amino-acid chain: Transaldolase (319 aa).

K125 acts as the Schiff-base intermediate with substrate in catalysis.

It belongs to the transaldolase family. Type 1 subfamily. As to quaternary structure, homodimer.

Its subcellular location is the cytoplasm. It catalyses the reaction D-sedoheptulose 7-phosphate + D-glyceraldehyde 3-phosphate = D-erythrose 4-phosphate + beta-D-fructose 6-phosphate. The protein operates within carbohydrate degradation; pentose phosphate pathway; D-glyceraldehyde 3-phosphate and beta-D-fructose 6-phosphate from D-ribose 5-phosphate and D-xylulose 5-phosphate (non-oxidative stage): step 2/3. Its function is as follows. Transaldolase is important for the balance of metabolites in the pentose-phosphate pathway. The polypeptide is Transaldolase (Ralstonia pickettii (strain 12J)).